A 1050-amino-acid polypeptide reads, in one-letter code: Inositol hexakisphosphate kinase 1 (1050 aa).

Disordered regions lie at residues 87-117 (KITRSEATPKSVPEGLQVSEKKNNPDTLSSS), 129-177 (PAIK…IQNV), 269-319 (RQEN…DNEH), and 396-423 (SDLDQENNGKNDTSNENKDIEVNHNNND). Ser150 is subject to Phosphoserine. The span at 156 to 173 (KQQSHQPQVLHHQTSLKP) shows a compositional bias: polar residues. Positions 290–306 (ESIKEKPNTFEQDKEGE) are enriched in basic and acidic residues. A compositionally biased stretch (acidic residues) spans 307-316 (QADEEEDEGD). Ser396 carries the phosphoserine modification. Positions 402–417 (NNGKNDTSNENKDIEV) are enriched in basic and acidic residues. At Ser469 the chain carries Phosphoserine. The span at 508-522 (NDSYFSSSSSHNSCS) shows a compositional bias: low complexity. 2 disordered regions span residues 508 to 539 (NDSYFSSSSSHNSCSFGERGNTNKLKRRDSGS) and 562 to 625 (RKRN…PNLQ). 8 positions are modified to phosphoserine: Ser537, Ser539, Ser566, Ser583, Ser589, Ser646, Ser664, and Ser670. Positions 566–624 (SNTTTMGNHNARLGSSPSFLTQKSRASSHDASNTSMKTLGDSSSQASLQMDDSKVNPNL) are enriched in polar residues. A substrate-binding site is contributed by 772–780 (PCALDLKMG).

It belongs to the inositol phosphokinase (IPK) family.

It localises to the cytoplasm. The catalysed reaction is 1D-myo-inositol hexakisphosphate + ATP = 5-diphospho-1D-myo-inositol 1,2,3,4,6-pentakisphosphate + ADP. It carries out the reaction 1-diphospho-1D-myo-inositol 2,3,4,5,6-pentakisphosphate + ATP + H(+) = 1,5-bis(diphospho)-1D-myo-inositol 2,3,4,6-tetrakisphosphate + ADP. In terms of biological role, converts inositol hexakisphosphate (InsP6) to diphosphoinositol pentakisphosphate (InsP7/PP-InsP5). Involved in phosphate regulation and polyphosphate accumulation. Required for resistance to salt stress, cell wall integrity, vacuole morphogenesis, and telomere maintenance. The protein is Inositol hexakisphosphate kinase 1 (KCS1) of Saccharomyces cerevisiae (strain ATCC 204508 / S288c) (Baker's yeast).